A 698-amino-acid chain; its full sequence is Polyribonucleotide nucleotidyltransferase (698 aa).

D485 and D491 together coordinate Mg(2+). The KH domain occupies 552–611; that stretch reads PRITTIKINPEKIRDVIGKGGAVIRALTEETGTTIELDDDGTVKIASSNGEATKEAIRRI. One can recognise an S1 motif domain in the interval 621-689; it reads GRVYNGKVIR…RQGRVRLSIK (69 aa).

This sequence belongs to the polyribonucleotide nucleotidyltransferase family. Component of the RNA degradosome, which is a multiprotein complex involved in RNA processing and mRNA degradation. Mg(2+) serves as cofactor.

The protein localises to the cytoplasm. The catalysed reaction is RNA(n+1) + phosphate = RNA(n) + a ribonucleoside 5'-diphosphate. Functionally, involved in mRNA degradation. Catalyzes the phosphorolysis of single-stranded polyribonucleotides processively in the 3'- to 5'-direction. This Shewanella denitrificans (strain OS217 / ATCC BAA-1090 / DSM 15013) protein is Polyribonucleotide nucleotidyltransferase.